The primary structure comprises 258 residues: GTP cyclohydrolase FolE2 (258 aa).

The protein belongs to the GTP cyclohydrolase IV family.

It carries out the reaction GTP + H2O = 7,8-dihydroneopterin 3'-triphosphate + formate + H(+). It functions in the pathway cofactor biosynthesis; 7,8-dihydroneopterin triphosphate biosynthesis; 7,8-dihydroneopterin triphosphate from GTP: step 1/1. Functionally, converts GTP to 7,8-dihydroneopterin triphosphate. The polypeptide is GTP cyclohydrolase FolE2 (Geobacter sulfurreducens (strain ATCC 51573 / DSM 12127 / PCA)).